A 211-amino-acid chain; its full sequence is Octanoyltransferase (211 aa).

Positions 28-203 (GSAPETLLLV…HFQSLLKTWL (176 aa)) constitute a BPL/LPL catalytic domain. Substrate-binding positions include 66–73 (RGGDITYH), 133–135 (SIG), and 146–148 (GFA). Cysteine 164 serves as the catalytic Acyl-thioester intermediate.

It belongs to the LipB family.

The protein resides in the cytoplasm. It catalyses the reaction octanoyl-[ACP] + L-lysyl-[protein] = N(6)-octanoyl-L-lysyl-[protein] + holo-[ACP] + H(+). It participates in protein modification; protein lipoylation via endogenous pathway; protein N(6)-(lipoyl)lysine from octanoyl-[acyl-carrier-protein]: step 1/2. In terms of biological role, catalyzes the transfer of endogenously produced octanoic acid from octanoyl-acyl-carrier-protein onto the lipoyl domains of lipoate-dependent enzymes. Lipoyl-ACP can also act as a substrate although octanoyl-ACP is likely to be the physiological substrate. The sequence is that of Octanoyltransferase from Syntrophotalea carbinolica (strain DSM 2380 / NBRC 103641 / GraBd1) (Pelobacter carbinolicus).